The chain runs to 419 residues: MAPGALLVTSQNGRTSPLYDSDGYVPAPAALVVGGEVNYRGYHHAEWWVGNAKQVAQFYITRMGFEPVAHKGLETGSRFFASHVVQNNGVRFVFTSPVRSSARQTLKAAPLADQARLDEMYDHLDKHGDGVKDVAFEVDDVLAVYENAVANGAESVSSPHTDSCDEGDVISAAIKTYGDTTHTFIQRTTYTGPFLPGYRSCTTVDSANKFLPPVNLEAIDHCVGNQDWDEMSDACDFYERCLGFHRFWSVDDKDICTEFSALKSIVMSSPNQVVKMPINEPAHGKKKSQIEEYVDFYNGPGVQHIALRTPNIIEAVSNLRSRGVEFISVPDTYYENMRLRLKAAGMKLEESFDIIQKLNILIDFDEGGYLLQLFTKPLMDRPTVFIEIIQRNNFDGFGAGNFKSLFEAIEREQDLRGNL.

2 VOC domains span residues glycine 41–arginine 187 and alanine 218–lysine 376. Residues histidine 221, histidine 304, and glutamate 387 each coordinate Fe cation.

This sequence belongs to the 4HPPD family. Requires Fe cation as cofactor.

It catalyses the reaction 3-(4-hydroxyphenyl)pyruvate + O2 = homogentisate + CO2. It functions in the pathway amino-acid degradation; L-phenylalanine degradation; acetoacetate and fumarate from L-phenylalanine: step 3/6. This chain is 4-hydroxyphenylpyruvate dioxygenase (HPPD), found in Zymoseptoria tritici (Speckled leaf blotch fungus).